We begin with the raw amino-acid sequence, 737 residues long: ATP-dependent RNA helicase SUV3, mitochondrial (737 aa).

Residues 1–25 constitute a mitochondrion transit peptide; sequence MALVKYSTVFFPLRSLRLFVSIKKA. The 140-residue stretch at 226 to 365 folds into the Helicase ATP-binding domain; sequence EARKIRRHII…KSVLPLVKSI (140 aa). 239-246 provides a ligand contact to ATP; sequence GPTNSGKT. The Helicase C-terminal domain maps to 390–546; sequence PIKDGIKGLR…YLKTAVTWPT (157 aa).

Belongs to the helicase family. As to quaternary structure, MSU1 and SUV3 are the two components of the mitochondrial degradosome (mtEXO).

The protein localises to the mitochondrion matrix. The enzyme catalyses ATP + H2O = ADP + phosphate + H(+). Required for intron-independent turnover and processing of mitochondrial RNA. It is a key control element in nuclear-mitochondrial interactions. This chain is ATP-dependent RNA helicase SUV3, mitochondrial (SUV3), found in Saccharomyces cerevisiae (strain ATCC 204508 / S288c) (Baker's yeast).